Consider the following 345-residue polypeptide: Putative F-box protein At3g17265 (345 aa).

The 46-residue stretch at 1-46 (MMFAYLPPDLESEILSRVPATFLKELQTTCKRWYALFRDPIFVKKN) folds into the F-box domain.

The chain is Putative F-box protein At3g17265 from Arabidopsis thaliana (Mouse-ear cress).